The following is a 244-amino-acid chain: MIPWLEADDPFPHVSSALTEADGAAGLLAAGADLSTGRLLQAYKHGIFPWFSEGQPILWWSTDPRMVLFVENFRISASLKKKLKKIHHSITSRDGQWEIRFDHAFEEVMRACAAPRNGEGGTWISDEIIAGYTGLHKLGYAHSSELWLQGKLVGAAYGVSIGQMFYGESMFARVPDASKIALAYLVHFLRNHDVSMIDCQQETSHLATLGAAPIARTEFISRLRQAVSGPQISNWQPIALFPHD.

It belongs to the L/F-transferase family.

The protein resides in the cytoplasm. It carries out the reaction N-terminal L-lysyl-[protein] + L-leucyl-tRNA(Leu) = N-terminal L-leucyl-L-lysyl-[protein] + tRNA(Leu) + H(+). It catalyses the reaction N-terminal L-arginyl-[protein] + L-leucyl-tRNA(Leu) = N-terminal L-leucyl-L-arginyl-[protein] + tRNA(Leu) + H(+). The catalysed reaction is L-phenylalanyl-tRNA(Phe) + an N-terminal L-alpha-aminoacyl-[protein] = an N-terminal L-phenylalanyl-L-alpha-aminoacyl-[protein] + tRNA(Phe). Functions in the N-end rule pathway of protein degradation where it conjugates Leu, Phe and, less efficiently, Met from aminoacyl-tRNAs to the N-termini of proteins containing an N-terminal arginine or lysine. In Janthinobacterium sp. (strain Marseille) (Minibacterium massiliensis), this protein is Leucyl/phenylalanyl-tRNA--protein transferase.